The sequence spans 623 residues: MATEHVNGNGTEEPMDTTSAVIHSENFQTLLDAGLPQKVAEKLDEIYVAGLVAHSDLDERAIEALKEFNEDGALAVLQQFKDSDLSHVQNKSAFLCGVMKTYRQREKQGTKVADSSKGPDEAKIKALLERTGYTLDVTTGQRKYGGPPPDSVYSGQQPSVGTEIFVGKIPRDLFEDELVPLFEKAGPIWDLRLMMDPLTGLNRGYAFVTFCTKEAAQEAVKLYNNHEIRSGKHIGVCISVANNRLFVGSIPKSKTKEQILEEFSKVTEGLTDVILYHQPDDKKKNRGFCFLEYEDHKTAAQARRRLMSGKVKVWGNVGTVEWADPIEDPDPEVMAKVKVLFVRNLANTVTEEILEKSFSQFGKLERVKKLKDYAFIHFDERDGAVKAMEEMNGKDLEGENIEIVFAKPPDQKRKERKAQRQAAKNQMYDDYYYYGPPHMPPPTRGRGRGGRGGYGYPPDYYGYEDYYDYYGYDYHNYRGGYEDPYYGYEDFQVGARGRGGRGARGAAPSRGRGAAPPRGRAGYSQRGGPGSARGVRGARGGAQQQRGRGVRGARGGRGGNVGGKRKADGYNQPDTKRRQTNNQNWGSQPIAQQPLQGGDHSGNYGYKSENQEFYQDTFGQQWK.

Ala2 carries the N-acetylalanine modification. Phosphoserine is present on Ser159. RRM domains are found at residues 162–241 (TEIF…ISVA), 243–325 (NRLF…WADP), and 338–408 (KVLF…FAKP). Lys168 is covalently cross-linked (Glycyl lysine isopeptide (Lys-Gly) (interchain with G-Cter in SUMO2)). The residue at position 221 (Lys221) is an N6-acetyllysine. Position 363 is an N6-acetyllysine (Lys363). Tyr373 bears the Phosphotyrosine mark. The segment at 400-561 (NIEIVFAKPP…GARGGRGGNV (162 aa)) is interaction with APOBEC1. Arg444 carries the post-translational modification Asymmetric dimethylarginine; by PRMT1; alternate. Residue Arg444 is modified to Omega-N-methylarginine; by PRMT1; alternate. Repeat copies occupy residues 448–450 (RGG), 451–453 (RGG), 460–464 (YYGYE), 469–472 (YYGY), 478–480 (RGG), and 485–488 (YYGY). The 8 X 3 AA repeats of R-G-G stretch occupies residues 448–559 (RGGRGGYGYP…VRGARGGRGG (112 aa)). Positions 460-488 (YYGYEDYYDYYGYDYHNYRGGYEDPYYGY) are 3 X 4 AA repeats of Y-Y-G-Y. At Arg496 the chain carries Omega-N-methylarginine; by PRMT1. The disordered stretch occupies residues 497–623 (GRGGRGARGA…YQDTFGQQWK (127 aa)). A 1-4 repeat occupies 498 to 500 (RGG). Residues 504–522 (RGAAPSRGRGAAPPRGRAG) are compositionally biased toward low complexity. At Arg510 the chain carries Asymmetric dimethylarginine; by PRMT1. Asymmetric dimethylarginine; by PRMT1; alternate is present on Arg518. An Omega-N-methylarginine; by PRMT1; alternate modification is found at Arg518. The interaction with SMN stretch occupies residues 518-549 (RGRAGYSQRGGPGSARGVRGARGGAQQQRGRG). An Asymmetric dimethylarginine; alternate modification is found at Arg526. Arg526 bears the Omega-N-methylarginine; alternate mark. The 1-5 repeat unit spans residues 526–528 (RGG). An asymmetric dimethylarginine; by PRMT1; alternate mark is found at Arg536 and Arg539. Arg536 and Arg539 each carry omega-N-methylarginine; by PRMT1; alternate. 3 tandem repeats follow at residues 539-541 (RGG), 554-556 (RGG), and 557-559 (RGG). Gly residues predominate over residues 550 to 562 (VRGARGGRGGNVG). A Bipartite nuclear localization signal motif is present at residues 564-578 (KRKADGYNQPDTKRR). A compositionally biased stretch (polar residues) spans 580–595 (TNNQNWGSQPIAQQPL). A Phosphoserine modification is found at Ser587. A Glycyl lysine isopeptide (Lys-Gly) (interchain with G-Cter in SUMO2) cross-link involves residue Lys607. Over residues 611–623 (QEFYQDTFGQQWK) the composition is skewed to polar residues.

As to quaternary structure, identified in the spliceosome C complex. Component of the coding region determinant (CRD)-mediated complex, composed of DHX9, HNRNPU, IGF2BP1, SYNCRIP and YBX1. Identified in a mRNP complex, at least composed of DHX9, DDX3X, ELAVL1, HNRNPU, IGF2BP1, ILF3, PABPC1, PCBP2, PTBP2, STAU1, STAU2, SYNCRIP and YBX1. Identified in a mRNP granule complex, at least composed of ACTB, ACTN4, DHX9, ERG, HNRNPA1, HNRNPA2B1, HNRNPAB, HNRNPD, HNRNPL, HNRNPR, HNRNPU, HSPA1, HSPA8, IGF2BP1, ILF2, ILF3, NCBP1, NCL, PABPC1, PABPC4, PABPN1, RPLP0, RPS3, RPS3A, RPS4X, RPS8, RPS9, SYNCRIP, YBX1 and untranslated mRNAs. Interacts with GTPBP1. Isoform 1 is a component of the APOB mRNA editosome complex. Isoform 1 interacts with APOBEC1 and A1CF. Part of a complex associated with the FOS mCRD domain and consisting of PABPC1, PAIP1, CSDE1/UNR, HNRPD and SYNCRIP. Isoform 2 interacts with HNRPR. Interacts with POLR2A hyperphosphorylated C-terminal domain. Interacts with HABP4. Identified in a histone pre-mRNA complex, at least composed of ERI1, LSM11, SLBP, SNRPB, SYNCRIP and YBX1. Isoform 1 and isoform 2 interact with SMN. Isoform 2 interacts through its C-terminal domain with SYT7, SYT8 and SYT9. The non-phosphorylated and phosphorylated forms are colocalized with PAIP1 in polysomes. Post-translationally, phosphorylated on tyrosine. The membrane-bound form found in microsomes is phosphorylated in vitro by insulin receptor tyrosine kinase (INSR). Phosphorylation is inhibited upon binding to RNA, whereas the cytoplasmic form is poorly phosphorylated. As to expression, ubiquitous. Detected in heart, brain, spleen, lung, liver, skeletal muscle, adipocytes, kidney and testis.

The protein resides in the nucleus. Its subcellular location is the nucleoplasm. It localises to the microsome. The protein localises to the cytoplasm. Functionally, heterogeneous nuclear ribonucleoprotein (hnRNP) implicated in mRNA processing mechanisms. Component of the CRD-mediated complex that promotes MYC mRNA stability. Isoform 1 and isoform 2 are associated in vitro with pre-mRNA, splicing intermediates and mature mRNA protein complexes. Isoform 1 binds to apoB mRNA AU-rich sequences. Isoform 1 is part of the APOB mRNA editosome complex and may modulate the postranscriptional C to U RNA-editing of the APOB mRNA through either by binding to A1CF (APOBEC1 complementation factor), to APOBEC1 or to RNA itself. May be involved in translationally coupled mRNA turnover. Implicated with other RNA-binding proteins in the cytoplasmic deadenylation/translational and decay interplay of the FOS mRNA mediated by the major coding-region determinant of instability (mCRD) domain. Interacts in vitro preferentially with poly(A) and poly(U) RNA sequences. Isoform 2 may be involved in cytoplasmic vesicle-based mRNA transport through interaction with synaptotagmins. This chain is Heterogeneous nuclear ribonucleoprotein Q (Syncrip), found in Mus musculus (Mouse).